The sequence spans 199 residues: Probable nicotinate-nucleotide adenylyltransferase (199 aa).

Belongs to the NadD family.

It catalyses the reaction nicotinate beta-D-ribonucleotide + ATP + H(+) = deamido-NAD(+) + diphosphate. It functions in the pathway cofactor biosynthesis; NAD(+) biosynthesis; deamido-NAD(+) from nicotinate D-ribonucleotide: step 1/1. Functionally, catalyzes the reversible adenylation of nicotinate mononucleotide (NaMN) to nicotinic acid adenine dinucleotide (NaAD). The sequence is that of Probable nicotinate-nucleotide adenylyltransferase from Chloroherpeton thalassium (strain ATCC 35110 / GB-78).